We begin with the raw amino-acid sequence, 285 residues long: Ribose-phosphate pyrophosphokinase (285 aa).

Residues 33-35 (DGE) and 91-92 (RQ) contribute to the ATP site. His-125 and Asp-162 together coordinate Mg(2+). Lys-185 is a catalytic residue. D-ribose 5-phosphate-binding positions include Arg-187, Asp-211, and 215 to 219 (STGGT).

Belongs to the ribose-phosphate pyrophosphokinase family. Class III (archaeal) subfamily. Mg(2+) is required as a cofactor.

It is found in the cytoplasm. It catalyses the reaction D-ribose 5-phosphate + ATP = 5-phospho-alpha-D-ribose 1-diphosphate + AMP + H(+). The protein operates within metabolic intermediate biosynthesis; 5-phospho-alpha-D-ribose 1-diphosphate biosynthesis; 5-phospho-alpha-D-ribose 1-diphosphate from D-ribose 5-phosphate (route I): step 1/1. Its function is as follows. Involved in the biosynthesis of the central metabolite phospho-alpha-D-ribosyl-1-pyrophosphate (PRPP) via the transfer of pyrophosphoryl group from ATP to 1-hydroxyl of ribose-5-phosphate (Rib-5-P). The protein is Ribose-phosphate pyrophosphokinase of Methanothermobacter thermautotrophicus (strain ATCC 29096 / DSM 1053 / JCM 10044 / NBRC 100330 / Delta H) (Methanobacterium thermoautotrophicum).